A 329-amino-acid chain; its full sequence is DNA-directed RNA polymerase subunit alpha (329 aa).

Residues 1-234 (MQGSVTEFLK…EQLDAFVELR (234 aa)) are alpha N-terminal domain (alpha-NTD). The segment at 248–329 (FDPILLRPVD…WPPASLADDL (82 aa)) is alpha C-terminal domain (alpha-CTD).

It belongs to the RNA polymerase alpha chain family. As to quaternary structure, homodimer. The RNAP catalytic core consists of 2 alpha, 1 beta, 1 beta' and 1 omega subunit. When a sigma factor is associated with the core the holoenzyme is formed, which can initiate transcription.

The enzyme catalyses RNA(n) + a ribonucleoside 5'-triphosphate = RNA(n+1) + diphosphate. Its function is as follows. DNA-dependent RNA polymerase catalyzes the transcription of DNA into RNA using the four ribonucleoside triphosphates as substrates. The chain is DNA-directed RNA polymerase subunit alpha from Shewanella amazonensis (strain ATCC BAA-1098 / SB2B).